The primary structure comprises 158 residues: 2-C-methyl-D-erythritol 2,4-cyclodiphosphate synthase (158 aa).

Residues Asp9 and His11 each contribute to the a divalent metal cation site. 4-CDP-2-C-methyl-D-erythritol 2-phosphate-binding positions include 9 to 11 (DVH) and 35 to 36 (HS). His43 is a binding site for a divalent metal cation. 4-CDP-2-C-methyl-D-erythritol 2-phosphate contacts are provided by residues 57 to 59 (DIG), 62 to 66 (FPDTD), 101 to 107 (AQAPKMA), 133 to 136 (TTTE), Phe140, and Arg143.

Belongs to the IspF family. Homotrimer. It depends on a divalent metal cation as a cofactor.

The catalysed reaction is 4-CDP-2-C-methyl-D-erythritol 2-phosphate = 2-C-methyl-D-erythritol 2,4-cyclic diphosphate + CMP. The protein operates within isoprenoid biosynthesis; isopentenyl diphosphate biosynthesis via DXP pathway; isopentenyl diphosphate from 1-deoxy-D-xylulose 5-phosphate: step 4/6. Its function is as follows. Involved in the biosynthesis of isopentenyl diphosphate (IPP) and dimethylallyl diphosphate (DMAPP), two major building blocks of isoprenoid compounds. Catalyzes the conversion of 4-diphosphocytidyl-2-C-methyl-D-erythritol 2-phosphate (CDP-ME2P) to 2-C-methyl-D-erythritol 2,4-cyclodiphosphate (ME-CPP) with a corresponding release of cytidine 5-monophosphate (CMP). The chain is 2-C-methyl-D-erythritol 2,4-cyclodiphosphate synthase from Vibrio vulnificus (strain YJ016).